The sequence spans 324 residues: tRNA dimethylallyltransferase (324 aa).

17–24 contributes to the ATP binding site; it reads GPTASGKT. 19-24 lines the substrate pocket; that stretch reads TASGKT. Interaction with substrate tRNA stretches follow at residues 42–45, 166–170, 251–256, and 284–291; these read DSAL, QRIQR, RCVGYR, and KRQITWLR.

The protein belongs to the IPP transferase family. As to quaternary structure, monomer. The cofactor is Mg(2+).

It catalyses the reaction adenosine(37) in tRNA + dimethylallyl diphosphate = N(6)-dimethylallyladenosine(37) in tRNA + diphosphate. Its function is as follows. Catalyzes the transfer of a dimethylallyl group onto the adenine at position 37 in tRNAs that read codons beginning with uridine, leading to the formation of N6-(dimethylallyl)adenosine (i(6)A). This chain is tRNA dimethylallyltransferase, found in Burkholderia orbicola (strain AU 1054).